Reading from the N-terminus, the 129-residue chain is SOSS complex subunit C homolog (129 aa).

The segment at 105–129 (RLEPLPSPATTPTTPNAPPSHNISK) is disordered.

This sequence belongs to the SOSS-C family.

In Drosophila erecta (Fruit fly), this protein is SOSS complex subunit C homolog.